The following is a 638-amino-acid chain: MTPSTIQTASPFRLASAGEISEVQGILRTAGLLGPEKRIAYLGVLDPARGAGSEAEDRRFRVFIHDVSGARPQEVTVSVTNGTVISAVELDTAATGELPVLEEEFEVVEQLLATDERWLKALAARNLDVSKVRVAPLSAGVFEYAEERGRRILRGLAFVQDFPEDSAWAHPVDGLVAYVDVVSKEVTRVIDTGVFPVPAEHGNYTDPELTGPLRTTQKPISITQPEGPSFTVTGGNHIEWEKWSLDVGFDVREGVVLHNIAFRDGDRLRPIINRASIAEMVVPYGDPSPIRSWQNYFDTGEYLVGQYANSLELGCDCLGDITYLSPVISDAFGNPREIRNGICMHEEDWGILAKHSDLWSGINYTRRNRRMVISFFTTIGNYDYGFYWYLYLDGTIEFEAKATGVVFTSAFPEGGSDNISQLAPGLGAPFHQHIFSARLDMAIDGFTNRVEEEDVVRQTMGPGNERGNAFSRKRTVLTRESEAVREADARTGRTWIISNPESKNRLNEPVGYKLHAHNQPTLLADPGSSIARRAAFATKDLWVTRYADDERYPTGDFVNQHSGGAGLPSYIAQDRDIDGQDIVVWHTFGLTHFPRVEDWPIMPVDTVGFKLRPEGFFDRSPVLDVPANPSQSGSHCHG.

A propeptide spanning residues 1–2 (MT) is cleaved from the precursor. Residue 296-307 (YFDTGEYLVGQY) participates in substrate binding. Residue aspartate 298 is the Proton acceptor of the active site. Residues cysteine 317 and cysteine 343 are joined by a disulfide bond. Residue 379–384 (IGNYDY) coordinates substrate. Tyrosine 382 (schiff-base intermediate with substrate; via topaquinone) is an active-site residue. Position 382 is a 2',4',5'-topaquinone (tyrosine 382). Cu cation is bound by residues histidine 431, histidine 433, and histidine 592.

Belongs to the copper/topaquinone oxidase family. As to quaternary structure, homodimer. Requires Cu cation as cofactor. It depends on L-topaquinone as a cofactor. Post-translationally, topaquinone (TPQ) is generated by copper-dependent autoxidation of a specific tyrosyl residue.

It carries out the reaction a primary methyl amine + O2 + H2O = an aldehyde + H2O2 + NH4(+). The catalysed reaction is 2-phenylethylamine + O2 + H2O = 2-phenylacetaldehyde + H2O2 + NH4(+). In terms of biological role, catalyzes the oxidative deamination of phenylethylamine to phenylacetaldehyde with the concomitant production of hydrogen peroxide and ammonia. The chain is Phenylethylamine oxidase from Arthrobacter globiformis.